The sequence spans 213 residues: NAD(P)H-hydrate epimerase (213 aa).

Residues 8 to 210 enclose the YjeF N-terminal domain; the sequence is MYNIEENGHA…KIGIPPEAEK (203 aa). Residue 55–59 participates in (6S)-NADPHX binding; that stretch reads NNGGD. K(+) contacts are provided by N56 and D122. (6S)-NADPHX is bound by residues 126 to 132, Y137, and D155; that span reads GTGITGE. K(+) is bound at residue S158.

This sequence belongs to the NnrE/AIBP family. K(+) is required as a cofactor.

It catalyses the reaction (6R)-NADHX = (6S)-NADHX. The enzyme catalyses (6R)-NADPHX = (6S)-NADPHX. Functionally, catalyzes the epimerization of the S- and R-forms of NAD(P)HX, a damaged form of NAD(P)H that is a result of enzymatic or heat-dependent hydration. This is a prerequisite for the S-specific NAD(P)H-hydrate dehydratase to allow the repair of both epimers of NAD(P)HX. The polypeptide is NAD(P)H-hydrate epimerase (Cenarchaeum symbiosum (strain A)).